Reading from the N-terminus, the 325-residue chain is Ferrochelatase (325 aa).

Positions 195 and 276 each coordinate Fe cation.

Belongs to the ferrochelatase family.

It is found in the cytoplasm. It carries out the reaction heme b + 2 H(+) = protoporphyrin IX + Fe(2+). The protein operates within porphyrin-containing compound metabolism; protoheme biosynthesis; protoheme from protoporphyrin-IX: step 1/1. In terms of biological role, catalyzes the ferrous insertion into protoporphyrin IX. In Methylococcus capsulatus (strain ATCC 33009 / NCIMB 11132 / Bath), this protein is Ferrochelatase.